Here is a 929-residue protein sequence, read N- to C-terminus: LPS-assembly protein LptD (929 aa).

A signal peptide spans 1 to 24; it reads MKLRFIRSAGWLFLLFCLACNARA. The tract at residues 26–208 is disordered; it reads LPPLSSKPEQ…EAGDEKLRLA (183 aa). The span at 44-74 shows a compositional bias: basic and acidic residues; that stretch reads GDDKPVVIDTERIRGHHEYESGTRSESELRS. A compositionally biased stretch (polar residues) spans 154-164; the sequence is RTQSAPRTLSA. A compositionally biased stretch (basic and acidic residues) spans 181–208; sequence DQDRPGFAEGERIGGHREEAGDEKLRLA.

This sequence belongs to the LptD family. As to quaternary structure, component of the lipopolysaccharide transport and assembly complex. Interacts with LptE and LptA.

The protein resides in the cell outer membrane. Together with LptE, is involved in the assembly of lipopolysaccharide (LPS) at the surface of the outer membrane. This Nitrosospira multiformis (strain ATCC 25196 / NCIMB 11849 / C 71) protein is LPS-assembly protein LptD.